We begin with the raw amino-acid sequence, 310 residues long: Phosphoribosylaminoimidazole-succinocarboxamide synthase (310 aa).

This sequence belongs to the SAICAR synthetase family.

The catalysed reaction is 5-amino-1-(5-phospho-D-ribosyl)imidazole-4-carboxylate + L-aspartate + ATP = (2S)-2-[5-amino-1-(5-phospho-beta-D-ribosyl)imidazole-4-carboxamido]succinate + ADP + phosphate + 2 H(+). The protein operates within purine metabolism; IMP biosynthesis via de novo pathway; 5-amino-1-(5-phospho-D-ribosyl)imidazole-4-carboxamide from 5-amino-1-(5-phospho-D-ribosyl)imidazole-4-carboxylate: step 1/2. This chain is Phosphoribosylaminoimidazole-succinocarboxamide synthase, found in Stenotrophomonas maltophilia (strain K279a).